A 343-amino-acid chain; its full sequence is Mas-related G-protein coupled receptor member F (343 aa).

Residues 1-44 (MAGNCSWEAHPGNRNKMCPGLSEAPELYSRGFLTIEQIAMLPPP) lie on the Extracellular side of the membrane. The N-linked (GlcNAc...) asparagine glycan is linked to asparagine 4. Residues 45–66 (AVMNYIFLLLCLCGLVGNGLVL) form a helical membrane-spanning segment. Over 67 to 82 (WFFGFSIKRNPFSIYF) the chain is Cytoplasmic. A helical transmembrane segment spans residues 83–104 (LHLASADVGYLFSKAVFSILNT). The Extracellular portion of the chain corresponds to 105–123 (GGFLGTFADYIRSVCRVLG). The chain crosses the membrane as a helical span at residues 124-144 (LCMFLTGVSLLPAVSAERCAS). At 145-160 (VIFPAWYWRRRPKRLS) the chain is on the cytoplasmic side. Residues 161 to 181 (AVVCALLWVLSLLVTCLHNYF) form a helical membrane-spanning segment. The Extracellular portion of the chain corresponds to 182 to 198 (CVFLGRGAPGAACRHMD). The chain crosses the membrane as a helical span at residues 199 to 220 (IFLGILLFLLCCPLMVLPCLAL). Residues 221–241 (ILHVECRARRRQRSAKLNHVI) lie on the Cytoplasmic side of the membrane. The helical transmembrane segment at 242-263 (LAMVSVFLVSSIYLGIDWFLFW) threads the bilayer. Residues 264-273 (VFQIPAPFPE) are Extracellular-facing. The helical transmembrane segment at 274 to 294 (YVTDLCICINSSAKPIVYFLA) threads the bilayer. The Cytoplasmic portion of the chain corresponds to 295–343 (GRDKSQRLWEPLRVVFQRALRDGAELGEAGGSTPNTVTMEMQCPPGNAS). The tract at residues 320-343 (LGEAGGSTPNTVTMEMQCPPGNAS) is disordered.

It belongs to the G-protein coupled receptor 1 family. Mas subfamily.

The protein localises to the cell membrane. Functionally, orphan receptor. May bind to a neuropeptide and may regulate nociceptor function and/or development, including the sensation or modulation of pain. This chain is Mas-related G-protein coupled receptor member F (MRGPRF), found in Homo sapiens (Human).